Consider the following 493-residue polypeptide: Cytochrome c-552 (493 aa).

The N-terminal stretch at 1 to 25 is a signal peptide; the sequence is MEKKLKSWQGWLLFCGAMAVVFVLG. His116 lines the heme c pocket. Residues Cys144, Cys147, and Lys148 each coordinate heme. The heme c site is built by Cys182, Cys185, His186, Cys224, Cys227, and His228. Residues Glu230, Tyr231, Lys276, and Gln278 each coordinate Ca(2+). Tyr231 is a binding site for substrate. Position 279 (His279) interacts with substrate. Heme c-binding residues include His290, Cys297, Cys300, His301, His315, Cys328, Cys331, His332, and His407.

Belongs to the cytochrome c-552 family. Requires Ca(2+) as cofactor. It depends on heme c as a cofactor.

The protein resides in the periplasm. It catalyses the reaction 6 Fe(III)-[cytochrome c] + NH4(+) + 2 H2O = 6 Fe(II)-[cytochrome c] + nitrite + 8 H(+). Its pathway is nitrogen metabolism; nitrate reduction (assimilation). Functionally, catalyzes the reduction of nitrite to ammonia, consuming six electrons in the process. The chain is Cytochrome c-552 from Bacteroides fragilis (strain ATCC 25285 / DSM 2151 / CCUG 4856 / JCM 11019 / LMG 10263 / NCTC 9343 / Onslow / VPI 2553 / EN-2).